Here is a 103-residue protein sequence, read N- to C-terminus: Defensin-like protein 289 (103 aa).

Residues 1-29 (MATLKTTIFIIFILYISCTMFVNIFRVQA) form the signal peptide. 6 disulfide bridges follow: cysteine 33/cysteine 50, cysteine 39/cysteine 55, cysteine 43/cysteine 57, cysteine 72/cysteine 92, cysteine 78/cysteine 98, and cysteine 84/cysteine 100.

The protein belongs to the DEFL family.

It localises to the secreted. In Arabidopsis thaliana (Mouse-ear cress), this protein is Defensin-like protein 289.